The chain runs to 287 residues: Co-chaperone protein DjlA (287 aa).

At 1–6 the chain is on the periplasmic side; it reads MQIFGK. A helical transmembrane segment spans residues 7-30; it reads ILGAFFGFLFGGVFGALFGLFIGH. Residues 31 to 287 lie on the Cytoplasmic side of the membrane; it reads QFDKARRLSQ…DLIKKEKGFK (257 aa). The interval 192–213 is disordered; it reads GGFGGQQHQSHHSSSHGGWQQA. In terms of domain architecture, J spans 221–287; sequence DAYKILGIDA…DLIKKEKGFK (67 aa).

Homodimer.

The protein resides in the cell inner membrane. Functionally, regulatory DnaK co-chaperone. Direct interaction between DnaK and DjlA is needed for the induction of the wcaABCDE operon, involved in the synthesis of a colanic acid polysaccharide capsule, possibly through activation of the RcsB/RcsC phosphotransfer signaling pathway. The colanic acid capsule may help the bacterium survive conditions outside the host. The protein is Co-chaperone protein DjlA of Vibrio vulnificus (strain CMCP6).